Reading from the N-terminus, the 588-residue chain is Protein cereblon (588 aa).

Disordered regions lie at residues 1–107 and 159–197; these read MDDE…DDSD and QERR…DIGF. Positions 41 to 50 are enriched in polar residues; sequence AWNNATQDEQ. Positions 75–85 are enriched in acidic residues; sequence MVEDVLQDDTA. The segment covering 86–96 has biased composition (polar residues); it reads SEGSHPSSDMS. A compositionally biased stretch (basic and acidic residues) spans 159–168; the sequence is QERRRSRTSE. The segment covering 181–192 has biased composition (pro residues); it reads NDPPPQQPPRPP. A Lon N-terminal domain is found at 228-454; sequence HMLIFLHQHI…LIKSTFKDES (227 aa). A CULT domain is found at 453–562; that stretch reads ESLFFCRYCN…LAGSSVRIGK (110 aa). C458, C461, C527, and C530 together coordinate Zn(2+).

Belongs to the CRBN family. Likely a component of a DCX (DDB1-CUL4-X-box) protein ligase complex. May interact with pic/DDB1. In terms of processing, ubiquitinated.

It localises to the nucleus. It functions in the pathway protein modification; protein ubiquitination. In terms of biological role, substrate recognition component of a DCX (DDB1-CUL4-X-box) E3 protein ligase complex that mediates the ubiquitination and subsequent proteasomal degradation of target proteins. Has an essential role in mediating growth by negatively regulating insulin signaling. It also has a role in maintaining presynaptic function in the neuromuscular junction synapses of third-instar larvae. In Drosophila yakuba (Fruit fly), this protein is Protein cereblon.